The primary structure comprises 634 residues: Chaperone protein HtpG (634 aa).

The tract at residues 1–342 (MTVDTDKQTL…SSDLSLNVSR (342 aa)) is a; substrate-binding. The interval 343–559 (EILQSGPVVD…QGDLGLQMRQ (217 aa)) is b. Residues 560-634 (LLEASGQAVP…LNKLLLELSV (75 aa)) form a c region.

This sequence belongs to the heat shock protein 90 family. As to quaternary structure, homodimer.

It localises to the cytoplasm. Molecular chaperone. Has ATPase activity. This is Chaperone protein HtpG from Xanthomonas oryzae pv. oryzae (strain MAFF 311018).